A 336-amino-acid polypeptide reads, in one-letter code: DNA repair protein XRCC4 (336 aa).

The tract at residues 1 to 213 is interaction with IFFO1; the sequence is MERKISRIHL…EREKDIKQEG (213 aa). Phosphoserine; by PRKDC is present on Ser-53. 2 coiled-coil regions span residues 131 to 165 and 184 to 212; these read LDTI…FEKC and LNEK…IKQE. Residues 180–213 are interaction with LIG4; sequence FILVLNEKKTKIRSLHNKLLNAAQEREKDIKQEG. Ser-193 is modified (phosphoserine; by PRKDC). Lys-210 participates in a covalent cross-link: Glycyl lysine isopeptide (Lys-Gly) (interchain with G-Cter in SUMO). The tract at residues 212–249 is disordered; that stretch reads EGETAICSEMTADRDPVYDESTDEESENQTDLSGLASA. Tyr-229 is modified (phosphotyrosine). Residues 229 to 239 show a composition bias toward acidic residues; the sequence is YDESTDEESEN. A Phosphoserine modification is found at Ser-232. Thr-233 carries the post-translational modification Phosphothreonine; by CK2. Ser-237 and Ser-256 each carry phosphoserine. At Ser-260 the chain carries Phosphoserine; by PRKDC. Residues 264 to 336 form a disordered region; sequence TDIAPSRKRR…SSPEDLFDEI (73 aa). The Nuclear localization signal motif lies at 270-275; the sequence is RKRRQR. Lys-296 is covalently cross-linked (Glycyl lysine isopeptide (Lys-Gly) (interchain with G-Cter in ubiquitin)). Residues Ser-303, Ser-304, Ser-315, and Ser-320 each carry the phosphoserine; by PRKDC modification. Polar residues predominate over residues 317-329; it reads ENMSLETLRNSSP. Thr-323 carries the post-translational modification Phosphothreonine; by PRKDC. Ser-327 and Ser-328 each carry phosphoserine; by PRKDC.

The protein belongs to the XRCC4-XLF family. XRCC4 subfamily. As to quaternary structure, homodimer and homotetramer in solution. Interacts with NHEJ1/XLF; the interaction is direct and is mediated via a head-to-head interaction between N-terminal head regions. Interacts with LIG4; the LIG4-XRCC4 subcomplex has a 1:2 stoichiometry and XRCC4 is required for LIG4 stability. Component of the core long-range non-homologous end joining (NHEJ) complex (also named DNA-PK complex) composed of PRKDC, LIG4, XRCC4, XRCC6/Ku70, XRCC5/Ku86 and NHEJ1/XLF. Additional component of the NHEJ complex includes PAXX. Following autophosphorylation, PRKDC dissociates from DNA, leading to formation of the short-range NHEJ complex, composed of LIG4, XRCC4, XRCC6/Ku70, XRCC5/Ku86 and NHEJ1/XLF. Interacts with PRKDC; the interaction is direct. Interacts with XRCC6/Ku70; the interaction is direct. Interacts with APTX and APLF. Forms a heterotetramer with IFFO1; the interaction involves LIG4-free XRCC4 and leads to the relocalization of IFFO1 to the sites of DNA damage. Interacts with PNKP; mainly interacts with PNKP when phosphorylated at Thr-233, but is also able to interact at much lower level with PNKP when not unphosphorylated. Interacts with POLL (DNA polymerase lambda). In terms of assembly, interacts with XKR4; interacts with the processed form of XKR4, which is cleaved by caspase. Phosphorylated by PRKDC at the C-terminus in response to DNA damage; Ser-260 and Ser-320 constitute the main phosphorylation sites. Phosphorylations by PRKDC at the C-terminus of XRCC4 and NHEJ1/XLF are highly redundant and regulate ability of the XRCC4-NHEJ1/XLF subcomplex to bridge DNA. Phosphorylation by PRKDC does not prevent interaction with NHEJ1/XLF but disrupts ability to bridge DNA and promotes detachment from DNA. Phosphorylation at Ser-327 and Ser-328 by PRKDC promotes recognition by the SCF(FBXW7) complex and subsequent ubiquitination via 'Lys-63'-linked ubiquitin. Phosphorylation at Thr-233 by CK2 promotes interaction with PNKP; regulating PNKP activity and localization to DNA damage sites. Phosphorylation by CK2 promotes interaction with APTX. In terms of processing, ubiquitinated at Lys-296 by the SCF(FBXW7) complex via 'Lys-63'-linked ubiquitination, thereby promoting double-strand break repair: the SCF(FBXW7) complex specifically recognizes XRCC4 when phosphorylated at Ser-327 and Ser-328 by PRKDC, and 'Lys-63'-linked ubiquitination facilitates DNA non-homologous end joining (NHEJ) by enhancing association with XRCC5/Ku80 and XRCC6/Ku70. Monoubiquitinated. Post-translationally, undergoes proteolytic processing by caspase-3 (CASP3). This generates the protein XRCC4, C-terminus (XRCC4/C), which translocates to the cytoplasm and activates phospholipid scramblase activity of XKR4, thereby promoting phosphatidylserine exposure on apoptotic cell surface. In terms of tissue distribution, widely expressed.

The protein localises to the nucleus. Its subcellular location is the chromosome. It is found in the cytoplasm. Functionally, DNA non-homologous end joining (NHEJ) core factor, required for double-strand break repair and V(D)J recombination. Acts as a scaffold protein that regulates recruitment of other proteins to DNA double-strand breaks (DSBs). Associates with NHEJ1/XLF to form alternating helical filaments that bridge DNA and act like a bandage, holding together the broken DNA until it is repaired. The XRCC4-NHEJ1/XLF subcomplex binds to the DNA fragments of a DSB in a highly diffusive manner and robustly bridges two independent DNA molecules, holding the broken DNA fragments in close proximity to one other. The mobility of the bridges ensures that the ends remain accessible for further processing by other repair factors. Plays a key role in the NHEJ ligation step of the broken DNA during DSB repair via direct interaction with DNA ligase IV (LIG4): the LIG4-XRCC4 subcomplex reseals the DNA breaks after the gap filling is completed. XRCC4 stabilizes LIG4, regulates its subcellular localization and enhances LIG4's joining activity. Binding of the LIG4-XRCC4 subcomplex to DNA ends is dependent on the assembly of the DNA-dependent protein kinase complex DNA-PK to these DNA ends. Promotes displacement of PNKP from processed strand break termini. Its function is as follows. Acts as an activator of the phospholipid scramblase activity of XKR4. This form, which is generated upon caspase-3 (CASP3) cleavage, translocates into the cytoplasm and interacts with XKR4, thereby promoting phosphatidylserine scramblase activity of XKR4 and leading to phosphatidylserine exposure on apoptotic cell surface. The chain is DNA repair protein XRCC4 from Homo sapiens (Human).